Here is a 311-residue protein sequence, read N- to C-terminus: Small ribosomal subunit biogenesis GTPase RsgA (311 aa).

In terms of domain architecture, CP-type G spans 88 to 246 (SKEKEQVIVA…VIDTPGIREF (159 aa)). Residues 137 to 140 (NKID) and 188 to 196 (GHSGVGKST) each bind GTP. Cysteine 270, cysteine 275, histidine 277, and cysteine 283 together coordinate Zn(2+).

Belongs to the TRAFAC class YlqF/YawG GTPase family. RsgA subfamily. In terms of assembly, monomer. Associates with 30S ribosomal subunit, binds 16S rRNA. It depends on Zn(2+) as a cofactor.

The protein localises to the cytoplasm. One of several proteins that assist in the late maturation steps of the functional core of the 30S ribosomal subunit. Helps release RbfA from mature subunits. May play a role in the assembly of ribosomal proteins into the subunit. Circularly permuted GTPase that catalyzes slow GTP hydrolysis, GTPase activity is stimulated by the 30S ribosomal subunit. This is Small ribosomal subunit biogenesis GTPase RsgA from Chlorobaculum tepidum (strain ATCC 49652 / DSM 12025 / NBRC 103806 / TLS) (Chlorobium tepidum).